We begin with the raw amino-acid sequence, 507 residues long: Chromosomal replication initiator protein DnaA (507 aa).

The domain I, interacts with DnaA modulators stretch occupies residues 1 to 87 (MSVELWQQCV…IGSKRSSAPR (87 aa)). The segment covering 85 to 110 (APRAAPNAPLAAAQVSQAQANAAPAS) has biased composition (low complexity). The disordered stretch occupies residues 85 to 158 (APRAAPNAPL…QQAPVRAEQR (74 aa)). Residues 87 to 170 (RAAPNAPLAA…QVEGALKHTS (84 aa)) form a domain II region. Basic and acidic residues predominate over residues 126-140 (QKTEEISEEPSRDSF). The segment at 171–387 (YLNRTFTFEN…GALKRVIAHS (217 aa)) is domain III, AAA+ region. Residues glycine 215, glycine 217, lysine 218, and threonine 219 each contribute to the ATP site. A domain IV, binds dsDNA region spans residues 388–507 (HFMGRDITIE…YKNLLRTLTT (120 aa)).

This sequence belongs to the DnaA family. As to quaternary structure, oligomerizes as a right-handed, spiral filament on DNA at oriC.

It is found in the cytoplasm. Its function is as follows. Plays an essential role in the initiation and regulation of chromosomal replication. ATP-DnaA binds to the origin of replication (oriC) to initiate formation of the DNA replication initiation complex once per cell cycle. Binds the DnaA box (a 9 base pair repeat at the origin) and separates the double-stranded (ds)DNA. Forms a right-handed helical filament on oriC DNA; dsDNA binds to the exterior of the filament while single-stranded (ss)DNA is stabiized in the filament's interior. The ATP-DnaA-oriC complex binds and stabilizes one strand of the AT-rich DNA unwinding element (DUE), permitting loading of DNA polymerase. After initiation quickly degrades to an ADP-DnaA complex that is not apt for DNA replication. Binds acidic phospholipids. This Pseudomonas fluorescens (strain Pf0-1) protein is Chromosomal replication initiator protein DnaA.